Consider the following 347-residue polypeptide: S-adenosylmethionine:tRNA ribosyltransferase-isomerase (347 aa).

It belongs to the QueA family. In terms of assembly, monomer.

The protein resides in the cytoplasm. It catalyses the reaction 7-aminomethyl-7-carbaguanosine(34) in tRNA + S-adenosyl-L-methionine = epoxyqueuosine(34) in tRNA + adenine + L-methionine + 2 H(+). It participates in tRNA modification; tRNA-queuosine biosynthesis. In terms of biological role, transfers and isomerizes the ribose moiety from AdoMet to the 7-aminomethyl group of 7-deazaguanine (preQ1-tRNA) to give epoxyqueuosine (oQ-tRNA). The sequence is that of S-adenosylmethionine:tRNA ribosyltransferase-isomerase from Bordetella bronchiseptica (strain ATCC BAA-588 / NCTC 13252 / RB50) (Alcaligenes bronchisepticus).